A 262-amino-acid chain; its full sequence is Mlc titration factor A (262 aa).

Zn(2+)-binding residues include His-111, His-148, His-152, and Glu-211.

It belongs to the MtfA family. In terms of assembly, interacts with Mlc. Zn(2+) serves as cofactor.

It localises to the cytoplasm. Its function is as follows. Involved in the modulation of the activity of the glucose-phosphotransferase system (glucose-PTS). Interacts with the transcriptional repressor Mlc, preventing its interaction with DNA and leading to the modulation of expression of genes regulated by Mlc, including ptsG, which encodes the PTS system glucose-specific EIICB component. Shows zinc-dependent metallopeptidase activity. The chain is Mlc titration factor A from Serratia proteamaculans (strain 568).